The following is a 325-amino-acid chain: Acetyl-coenzyme A carboxylase carboxyl transferase subunit alpha (325 aa).

The CoA carboxyltransferase C-terminal domain occupies 38–292 (RLEERLSKLQ…DGILKETLKS (255 aa)).

The protein belongs to the AccA family. Acetyl-CoA carboxylase is a heterohexamer composed of biotin carboxyl carrier protein (AccB), biotin carboxylase (AccC) and two subunits each of ACCase subunit alpha (AccA) and ACCase subunit beta (AccD).

The protein resides in the cytoplasm. It carries out the reaction N(6)-carboxybiotinyl-L-lysyl-[protein] + acetyl-CoA = N(6)-biotinyl-L-lysyl-[protein] + malonyl-CoA. Its pathway is lipid metabolism; malonyl-CoA biosynthesis; malonyl-CoA from acetyl-CoA: step 1/1. Functionally, component of the acetyl coenzyme A carboxylase (ACC) complex. First, biotin carboxylase catalyzes the carboxylation of biotin on its carrier protein (BCCP) and then the CO(2) group is transferred by the carboxyltransferase to acetyl-CoA to form malonyl-CoA. The chain is Acetyl-coenzyme A carboxylase carboxyl transferase subunit alpha from Bacillus velezensis (strain DSM 23117 / BGSC 10A6 / LMG 26770 / FZB42) (Bacillus amyloliquefaciens subsp. plantarum).